The following is a 424-amino-acid chain: MKIVTINDSVSLKRDLDTGTDMQQNAVHSIIAQVREQGDQALFTLTKQFDGADLTTLRVQQAEIEAAYREMEEPVLQAIGEAIENIRDFHERQKRNSWMTTKSDGTILGQKITPLDSVGLYVPGGKAAYPSSIMMNVIPAQVAGVQNIVIVSPPQKDGSIPAGVLVTAAELGVKTILKVGGAQAIAALAYGTESVPAVDKITGPGNIYVALAKRAVFGHVDIDMIAGPSEIVVLADERANPRYIAADLLSQAEHDERASAILVTPSRALAEEVAVEVDQQLTTLPKREIAAASIRDYGAIYVTETLEEAVSVVNELAPEHLEILAEEPMSFLGKIRHAGAIFLGPYSSEPVGDYFAGPNHVLPTNGTARFSSPLNVDDFVKKSSIISYSKAALLENGAKISALARLEGLEAHARAIDIRLEDER.

NAD(+)-binding residues include Tyr-121, Gln-183, and Asn-206. 3 residues coordinate substrate: Ser-229, Gln-251, and His-254. Zn(2+) contacts are provided by Gln-251 and His-254. Residues Glu-319 and His-320 each act as proton acceptor in the active site. Residues His-320, Asp-353, Glu-407, and His-412 each contribute to the substrate site. Asp-353 contacts Zn(2+). Residue His-412 coordinates Zn(2+).

Belongs to the histidinol dehydrogenase family. It depends on Zn(2+) as a cofactor.

The enzyme catalyses L-histidinol + 2 NAD(+) + H2O = L-histidine + 2 NADH + 3 H(+). It functions in the pathway amino-acid biosynthesis; L-histidine biosynthesis; L-histidine from 5-phospho-alpha-D-ribose 1-diphosphate: step 9/9. Catalyzes the sequential NAD-dependent oxidations of L-histidinol to L-histidinaldehyde and then to L-histidine. This is Histidinol dehydrogenase from Halalkalibacterium halodurans (strain ATCC BAA-125 / DSM 18197 / FERM 7344 / JCM 9153 / C-125) (Bacillus halodurans).